The following is an 82-amino-acid chain: P2Y purinoceptor 2 (82 aa).

Residues 1 to 25 (LPLSYGVVCVLGLCLNVVALYIFLC) traverse the membrane as a helical segment. Residues 26–35 (RLKTWNASTT) lie on the Cytoplasmic side of the membrane. A helical membrane pass occupies residues 36–56 (YMFHLAVSDSLYAASLPLLVY). Over 57–75 (YYAQGDHWPFSTVLCKLVR) the chain is Extracellular. Residues 76 to 82 (FLFYTNL) traverse the membrane as a helical segment.

Belongs to the G-protein coupled receptor 1 family. As to expression, expressed in brain, heart, stria vascularis and vestibular labyrinth.

Its subcellular location is the cell membrane. Functionally, receptor for ATP and UTP coupled to G-proteins that activate a phosphatidylinositol-calcium second messenger system. Not activated by UDP. This Meriones unguiculatus (Mongolian jird) protein is P2Y purinoceptor 2 (P2RY2).